We begin with the raw amino-acid sequence, 549 residues long: Cilia- and flagella-associated protein 45 (549 aa).

The interval 1–27 (MPLSTAGVLSSASTASNRSRNRPRYRT) is disordered. Coiled coils occupy residues 119–232 (KEEL…MMEV) and 259–393 (IVEQ…KRNQ). Residues 391–416 (RNQEVADREWRRKEKENAQKKMETEA) are disordered.

The protein belongs to the CFAP45 family. Microtubule inner protein component of sperm flagellar doublet microtubules. Interacts with AK8; dimerization with AK8 may create a cavity at the interface of the dimer that can accommodate AMP. Interacts with CFAP52. Interacts with ENKUR. Directly interacts with DNALI1. Interacts with DNAH11. Interacts with DNAI1. As to expression, expressed in trachea multiciliated cells.

It localises to the cytoplasm. Its subcellular location is the cytoskeleton. The protein resides in the cilium axoneme. It is found in the flagellum axoneme. The protein localises to the cell projection. It localises to the cilium. Its subcellular location is the flagellum. Functionally, microtubule inner protein (MIP) part of the dynein-decorated doublet microtubules (DMTs) in cilia axoneme, which is required for motile cilia beating. It is an AMP-binding protein that may facilitate dynein ATPase-dependent ciliary and flagellar beating via adenine nucleotide homeostasis. May function as a donor of AMP to AK8 and hence promote ADP production. The protein is Cilia- and flagella-associated protein 45 of Bos taurus (Bovine).